A 406-amino-acid polypeptide reads, in one-letter code: Argininosuccinate synthase (406 aa).

Residues 10–18 (AYSGGLDTS) and Ala-37 each bind ATP. The L-citrulline site is built by Tyr-88 and Ser-93. Gly-118 is an ATP binding site. L-aspartate contacts are provided by Thr-120, Asn-124, and Asp-125. Asn-124 serves as a coordination point for L-citrulline. The L-citrulline site is built by Arg-128, Ser-179, Ser-188, Glu-264, and Tyr-276.

Belongs to the argininosuccinate synthase family. Type 1 subfamily. In terms of assembly, homotetramer.

Its subcellular location is the cytoplasm. It carries out the reaction L-citrulline + L-aspartate + ATP = 2-(N(omega)-L-arginino)succinate + AMP + diphosphate + H(+). Its pathway is amino-acid biosynthesis; L-arginine biosynthesis; L-arginine from L-ornithine and carbamoyl phosphate: step 2/3. This is Argininosuccinate synthase from Azotobacter vinelandii (strain DJ / ATCC BAA-1303).